The chain runs to 45 residues: Large ribosomal subunit protein bL36 (45 aa).

Belongs to the bacterial ribosomal protein bL36 family.

This is Large ribosomal subunit protein bL36 from Psychrobacter sp. (strain PRwf-1).